Consider the following 456-residue polypeptide: Histidine--tRNA ligase (456 aa).

It belongs to the class-II aminoacyl-tRNA synthetase family. In terms of assembly, homodimer.

The protein resides in the cytoplasm. The catalysed reaction is tRNA(His) + L-histidine + ATP = L-histidyl-tRNA(His) + AMP + diphosphate + H(+). The chain is Histidine--tRNA ligase from Christiangramia forsetii (strain DSM 17595 / CGMCC 1.15422 / KT0803) (Gramella forsetii).